A 188-amino-acid chain; its full sequence is Kininogen (188 aa).

Residues asparagine 36, asparagine 150, and asparagine 182 are each glycosylated (N-linked (GlcNAc...) asparagine).

Post-translationally, bradykinin is released from kininogen by kallikrein. N-glycosylated. Contains O-acetylated sialic acids as terminal elements on biantennary and triantennary N-glycans.

In terms of biological role, inhibits papain and ficin (cysteine proteinases) but not trypsin (a serine proteinase). The sequence is that of Kininogen from Anarhichas minor (Arctic spotted wolffish).